The chain runs to 631 residues: tRNA uridine 5-carboxymethylaminomethyl modification enzyme MnmG (631 aa).

FAD is bound by residues 13 to 18 (GGGHAG), V125, and S180. 273–287 (GPRYCPSIEDKVMRF) contributes to the NAD(+) binding site. Position 370 (Q370) interacts with FAD.

It belongs to the MnmG family. As to quaternary structure, homodimer. Heterotetramer of two MnmE and two MnmG subunits. It depends on FAD as a cofactor.

It is found in the cytoplasm. Functionally, NAD-binding protein involved in the addition of a carboxymethylaminomethyl (cmnm) group at the wobble position (U34) of certain tRNAs, forming tRNA-cmnm(5)s(2)U34. The polypeptide is tRNA uridine 5-carboxymethylaminomethyl modification enzyme MnmG (Vibrio atlanticus (strain LGP32) (Vibrio splendidus (strain Mel32))).